The sequence spans 225 residues: Guanylate kinase (225 aa).

The Guanylate kinase-like domain maps to 20–198 (GNLFMVVAPS…ALSELQCLVA (179 aa)). 27 to 34 (APSGAGKS) is an ATP binding site.

The protein belongs to the guanylate kinase family.

The protein resides in the cytoplasm. It carries out the reaction GMP + ATP = GDP + ADP. Essential for recycling GMP and indirectly, cGMP. In Paraburkholderia xenovorans (strain LB400), this protein is Guanylate kinase.